The following is a 598-amino-acid chain: Arylsulfate sulfotransferase AssT (598 aa).

Positions 1 to 27 (MFHPYRKTLLSGTVALALGLFATGAIA) are cleaved as a signal peptide. 4-methylumbelliferone is bound by residues His279 and His383. The cysteines at positions 445 and 451 are disulfide-linked. His463 is a binding site for 4-methylumbelliferone. His463 acts as the Nucleophile; sulfurylated histidine covalent intermediate in catalysis.

Belongs to the aryl sulfotransferase family. In terms of assembly, monomer.

The protein resides in the periplasm. The catalysed reaction is an aryl sulfate + a phenol = an aryl sulfate + a phenol. The enzyme catalyses 4-methylumbelliferone sulfate + phenol = phenyl sulfate + 4-methylumbelliferone. It catalyses the reaction 2-naphthyl sulfate + phenol = phenyl sulfate + 2-naphthol. Functionally, catalyzes the transfer of a sulfate group from a phenyl sulfate ester to other phenolic compounds. Is able to use several substrate donors and acceptors in vitro: using phenol as an acceptor substrate, 4-methylumbelliferyl sulfate is the best donor substrate, followed by beta-naphthyl sulfate, p-nitrophenyl sulfate (PNS), and alpha-naphthyl sulfate; using PNS as a donor substrate, alpha-naphthol is the best acceptor substrate, followed by phenol, resorcinol, p-acetaminophen, tyramine, and tyrosine. Cannot use 3'-phosphoadenosine-5'-phophosulfate (PAPS), the donor substrate of mammalian sulfotransferase. May be a detoxifying enzyme, converting toxic phenolic compounds into non-toxic materials. The protein is Arylsulfate sulfotransferase AssT of Lelliottia amnigena (Enterobacter amnigenus).